The following is a 372-amino-acid chain: Glutamate 5-kinase (372 aa).

Lys14 serves as a coordination point for ATP. 3 residues coordinate substrate: Ser54, Asp141, and Asn153. Position 173–174 (173–174 (TD)) interacts with ATP. The 79-residue stretch at 280 to 358 (RGTLVLDAGA…EAIESILGYS (79 aa)) folds into the PUA domain.

It belongs to the glutamate 5-kinase family.

The protein resides in the cytoplasm. The catalysed reaction is L-glutamate + ATP = L-glutamyl 5-phosphate + ADP. It participates in amino-acid biosynthesis; L-proline biosynthesis; L-glutamate 5-semialdehyde from L-glutamate: step 1/2. Catalyzes the transfer of a phosphate group to glutamate to form L-glutamate 5-phosphate. The polypeptide is Glutamate 5-kinase (Pseudomonas putida (strain ATCC 700007 / DSM 6899 / JCM 31910 / BCRC 17059 / LMG 24140 / F1)).